Here is a 29-residue protein sequence, read N- to C-terminus: Toxin TdII-3 (29 aa).

The region spanning 1–29 (KDGYLVGTDGCKYGCFTRPGHFCANEECL) is the LCN-type CS-alpha/beta domain.

Belongs to the long (4 C-C) scorpion toxin superfamily. Sodium channel inhibitor family. Beta subfamily. As to expression, expressed by the venom gland.

It localises to the secreted. Its function is as follows. Binds voltage-independently to sodium channels (Nav) and shifts the voltage of activation toward more negative potentials. This toxin is active against mammals and also affects neuromuscular preparations of frog. This is Toxin TdII-3 from Tityus discrepans (Venezuelan scorpion).